Consider the following 697-residue polypeptide: Elongation factor G 2 (697 aa).

Residues 5–280 (SKYRNIGIFA…AVVDYLPDPV (276 aa)) enclose the tr-type G domain. Residues 14 to 21 (AHVDAGKT), 78 to 82 (DTPGH), and 132 to 135 (NKLD) contribute to the GTP site.

This sequence belongs to the TRAFAC class translation factor GTPase superfamily. Classic translation factor GTPase family. EF-G/EF-2 subfamily.

It localises to the cytoplasm. Functionally, catalyzes the GTP-dependent ribosomal translocation step during translation elongation. During this step, the ribosome changes from the pre-translocational (PRE) to the post-translocational (POST) state as the newly formed A-site-bound peptidyl-tRNA and P-site-bound deacylated tRNA move to the P and E sites, respectively. Catalyzes the coordinated movement of the two tRNA molecules, the mRNA and conformational changes in the ribosome. This Shewanella frigidimarina (strain NCIMB 400) protein is Elongation factor G 2.